Consider the following 164-residue polypeptide: MDHGFYPTNLEGEGLRIGIVQARFNEPVCEALREACVAELEQLGVAGEDVLLVTVPGALEVPLALQKMAESGQFDALIALGAVIRGETYHFELVSNESGAGITRVCLDFNIAIANGILTTDTDAQAHARTREKGRDCARTAIEMANLTAALDGLQDHGQDDENE.

Residues F24, 58-60, and 82-84 contribute to the 5-amino-6-(D-ribitylamino)uracil site; these read ALE and AVI. A (2S)-2-hydroxy-3-oxobutyl phosphate-binding site is contributed by 87 to 88; that stretch reads ET. The active-site Proton donor is H90. Residue N115 coordinates 5-amino-6-(D-ribitylamino)uracil. R129 contacts (2S)-2-hydroxy-3-oxobutyl phosphate.

Belongs to the DMRL synthase family.

The enzyme catalyses (2S)-2-hydroxy-3-oxobutyl phosphate + 5-amino-6-(D-ribitylamino)uracil = 6,7-dimethyl-8-(1-D-ribityl)lumazine + phosphate + 2 H2O + H(+). It functions in the pathway cofactor biosynthesis; riboflavin biosynthesis; riboflavin from 2-hydroxy-3-oxobutyl phosphate and 5-amino-6-(D-ribitylamino)uracil: step 1/2. Catalyzes the formation of 6,7-dimethyl-8-ribityllumazine by condensation of 5-amino-6-(D-ribitylamino)uracil with 3,4-dihydroxy-2-butanone 4-phosphate. This is the penultimate step in the biosynthesis of riboflavin. This Ralstonia nicotianae (strain ATCC BAA-1114 / GMI1000) (Ralstonia solanacearum) protein is 6,7-dimethyl-8-ribityllumazine synthase.